The following is a 294-amino-acid chain: Sarcotoxin II-2 (294 aa).

An N-terminal signal peptide occupies residues Met-1 to Ala-22. The propeptide at Tyr-23–Pro-24 is removed by a dipeptidylpeptidase. Pyrrolidone carboxylic acid is present on Gln-25. Position 293 is an arginine amide (Arg-293).

Belongs to the attacin/sarcotoxin-2 family. In terms of tissue distribution, synthesized by the fat body and is eventually secreted into the hemolymph.

It is found in the secreted. Functionally, sarcotoxin II is an antibacterial protein which plays a role in the inflammatory response of this insect. The main effect of sarcotoxin II on E.coli may be the inhibition of cell wall synthesis, including septum formation. This Sarcophaga peregrina (Flesh fly) protein is Sarcotoxin II-2.